Reading from the N-terminus, the 342-residue chain is S-adenosylmethionine:tRNA ribosyltransferase-isomerase (342 aa).

This sequence belongs to the QueA family. Monomer.

The protein resides in the cytoplasm. It carries out the reaction 7-aminomethyl-7-carbaguanosine(34) in tRNA + S-adenosyl-L-methionine = epoxyqueuosine(34) in tRNA + adenine + L-methionine + 2 H(+). Its pathway is tRNA modification; tRNA-queuosine biosynthesis. Functionally, transfers and isomerizes the ribose moiety from AdoMet to the 7-aminomethyl group of 7-deazaguanine (preQ1-tRNA) to give epoxyqueuosine (oQ-tRNA). In Listeria monocytogenes serovar 1/2a (strain ATCC BAA-679 / EGD-e), this protein is S-adenosylmethionine:tRNA ribosyltransferase-isomerase.